The sequence spans 568 residues: Adenine deaminase (568 aa).

Belongs to the metallo-dependent hydrolases superfamily. Adenine deaminase family. Requires Mn(2+) as cofactor.

It carries out the reaction adenine + H2O + H(+) = hypoxanthine + NH4(+). This is Adenine deaminase from Clostridium perfringens (strain ATCC 13124 / DSM 756 / JCM 1290 / NCIMB 6125 / NCTC 8237 / Type A).